The following is a 63-amino-acid chain: Overexpressed in colon carcinoma 1 protein homolog (63 aa).

Positions 1 to 12 are enriched in low complexity; sequence MGCGNSTAASAG. A disordered region spans residues 1–40; it reads MGCGNSTAASAGAGQGPAGAAKDVTEESITEDDKRRNYGG.

The protein belongs to the OCC1 family.

This Bos taurus (Bovine) protein is Overexpressed in colon carcinoma 1 protein homolog.